The following is a 106-amino-acid chain: MHTYIYIYTVYIQMVAFSPYRIVLPFVAFVDLASFSSFRSYQAFLRPFLRPFRHQTCSSYFALDLDFASAFVVPAASFVESLLAYQAYSAYQACLAYPACLACQAS.

2 consecutive transmembrane segments (helical) span residues 10-30 and 65-85; these read VYIQ…VAFV and LDFA…LLAY.

It localises to the membrane. This is an uncharacterized protein from Saccharomyces cerevisiae (strain ATCC 204508 / S288c) (Baker's yeast).